The following is a 257-amino-acid chain: Zinc transporter ZupT (257 aa).

3 helical membrane passes run Leu5–Gly25, Leu32–Met52, and Gly61–Leu81. Fe(2+) contacts are provided by Asn120 and Glu123. Zn(2+) contacts are provided by Glu123 and His148. 4 helical membrane passes run Leu137–Ala157, Ile171–Ile191, Met195–Leu215, and Gly236–Ile256. Residues Asn149, Glu152, and Glu181 each contribute to the Fe(2+) site. A Zn(2+)-binding site is contributed by Glu152.

It belongs to the ZIP transporter (TC 2.A.5) family. ZupT subfamily.

The protein localises to the cell inner membrane. The enzyme catalyses Zn(2+)(in) = Zn(2+)(out). In terms of biological role, mediates zinc uptake. May also transport other divalent cations. The sequence is that of Zinc transporter ZupT from Escherichia coli O7:K1 (strain IAI39 / ExPEC).